A 238-amino-acid chain; its full sequence is NADH-quinone oxidoreductase subunit C (238 aa).

The span at Met-1 to Thr-11 shows a compositional bias: polar residues. The interval Met-1–Asp-20 is disordered.

It belongs to the complex I 30 kDa subunit family. NDH-1 is composed of 14 different subunits. Subunits NuoB, C, D, E, F, and G constitute the peripheral sector of the complex.

Its subcellular location is the cell membrane. The catalysed reaction is a quinone + NADH + 5 H(+)(in) = a quinol + NAD(+) + 4 H(+)(out). Its function is as follows. NDH-1 shuttles electrons from NADH, via FMN and iron-sulfur (Fe-S) centers, to quinones in the respiratory chain. The immediate electron acceptor for the enzyme in this species is believed to be a menaquinone. Couples the redox reaction to proton translocation (for every two electrons transferred, four hydrogen ions are translocated across the cytoplasmic membrane), and thus conserves the redox energy in a proton gradient. This Mycolicibacterium smegmatis (strain ATCC 700084 / mc(2)155) (Mycobacterium smegmatis) protein is NADH-quinone oxidoreductase subunit C.